Consider the following 392-residue polypeptide: Anhydro-N-acetylmuramic acid kinase (392 aa).

22–29 (GTSMDGVD) is a binding site for ATP.

It belongs to the anhydro-N-acetylmuramic acid kinase family.

It carries out the reaction 1,6-anhydro-N-acetyl-beta-muramate + ATP + H2O = N-acetyl-D-muramate 6-phosphate + ADP + H(+). It functions in the pathway amino-sugar metabolism; 1,6-anhydro-N-acetylmuramate degradation. Its pathway is cell wall biogenesis; peptidoglycan recycling. In terms of biological role, catalyzes the specific phosphorylation of 1,6-anhydro-N-acetylmuramic acid (anhMurNAc) with the simultaneous cleavage of the 1,6-anhydro ring, generating MurNAc-6-P. Is required for the utilization of anhMurNAc either imported from the medium or derived from its own cell wall murein, and thus plays a role in cell wall recycling. This Burkholderia pseudomallei (strain 1106a) protein is Anhydro-N-acetylmuramic acid kinase.